A 371-amino-acid polypeptide reads, in one-letter code: 4-hydroxy-3-methylbut-2-en-1-yl diphosphate synthase (flavodoxin) (371 aa).

Residues C270, C273, C305, and E312 each coordinate [4Fe-4S] cluster.

It belongs to the IspG family. [4Fe-4S] cluster is required as a cofactor.

The enzyme catalyses (2E)-4-hydroxy-3-methylbut-2-enyl diphosphate + oxidized [flavodoxin] + H2O + 2 H(+) = 2-C-methyl-D-erythritol 2,4-cyclic diphosphate + reduced [flavodoxin]. It functions in the pathway isoprenoid biosynthesis; isopentenyl diphosphate biosynthesis via DXP pathway; isopentenyl diphosphate from 1-deoxy-D-xylulose 5-phosphate: step 5/6. In terms of biological role, converts 2C-methyl-D-erythritol 2,4-cyclodiphosphate (ME-2,4cPP) into 1-hydroxy-2-methyl-2-(E)-butenyl 4-diphosphate. The protein is 4-hydroxy-3-methylbut-2-en-1-yl diphosphate synthase (flavodoxin) of Shewanella sp. (strain W3-18-1).